Here is a 407-residue protein sequence, read N- to C-terminus: Extracellular superoxide dismutase [Cu-Zn] 3 (407 aa).

The N-terminal stretch at 1–19 is a signal peptide; the sequence is MRLLSVLVFLISVISIAKA. Residues 20–386 are Extracellular-facing; it reads DYQYAFCKFN…SESYNDNEPG (367 aa). Residues N51, N205, and N224 are each glycosylated (N-linked (GlcNAc...) asparagine). Cu cation is bound by residues H245 and H247. An N-linked (GlcNAc...) asparagine glycan is attached at N256. H263 provides a ligand contact to Cu cation. Zn(2+) contacts are provided by H263, H271, H280, and D283. Residue H320 coordinates Cu cation. 2 N-linked (GlcNAc...) asparagine glycosylation sites follow: N321 and N364. The helical transmembrane segment at 387 to 406 threads the bilayer; the sequence is SSSTVIPFFALIIFSIIFAL. Position 407 (L407) is a topological domain, cytoplasmic.

Belongs to the Cu-Zn superoxide dismutase family. Cu cation serves as cofactor. It depends on Zn(2+) as a cofactor.

Its subcellular location is the cell membrane. It catalyses the reaction 2 superoxide + 2 H(+) = H2O2 + O2. Its function is as follows. Protect the extracellular space from toxic effect of reactive oxygen intermediates by converting superoxyde radicals into hydrogen peroxyde and oxygen. This Dictyostelium discoideum (Social amoeba) protein is Extracellular superoxide dismutase [Cu-Zn] 3 (sodC).